We begin with the raw amino-acid sequence, 974 residues long: GATOR2 complex protein WDR59 (974 aa).

WD repeat units lie at residues 57 to 98 (QSKW…GEVG), 103 to 143 (GHTR…KPTV), 146 to 185 (SAVAGASQVKWNKKNANCLATSHDGDVRIWDKRKPSTAVE), 189 to 229 (AHLS…KYLN), 232 to 276 (PCQV…TPVH), 278 to 318 (FVGH…RVDS), and 319 to 362 (QMQR…TASH). Residues 350 to 374 (HTEDTDHQHTASHGEEEALKEDPPR) are disordered. Residues 393–494 (QEFSLINVQI…RQLVSCLESF (102 aa)) form the RWD domain. Phosphoserine is present on serine 564. The stretch at 668–706 (LNVNDIQETCQKNAASALLVGRKDLVQVWSLATVATDLC) is one WD 8 repeat. Phosphoserine is present on residues serine 821, serine 822, and serine 830. The tract at residues 831–852 (LTYSDPRERERDQHDKNKRLLD) is disordered. A compositionally biased stretch (basic and acidic residues) spans 835–851 (DPRERERDQHDKNKRLL). A C4-type zinc finger spans residues 901–920 (YCSHCRSEVRGTQCAICKGF). Residues cysteine 902, cysteine 905, cysteine 914, cysteine 917, cysteine 927, cysteine 938, histidine 943, histidine 946, histidine 949, cysteine 960, cysteine 964, cysteine 966, and cysteine 968 each contribute to the Zn(2+) site. Residues 921–973 (TFQCAICHVAVRGSSNFCLTCGHGGHTSHMMEWFRTQEVCPTGCGCHCLLEST) form an RING-type; atypical zinc finger.

It belongs to the WD repeat WDR59 family. As to quaternary structure, component of the GATOR2 subcomplex, composed of MIOS, SEC13, SEH1L, WDR24 and WDR59. The GATOR2 complex interacts with CASTOR1 and CASTOR2; the interaction is negatively regulated by arginine. The GATOR2 complex interacts with SESN1, SESN2 and SESN3; the interaction is negatively regulated by amino acids. Interacts with DDB1-CUL4A/B E3 ligase complexes.

It localises to the lysosome membrane. The GATOR2 complex is negatively regulated by the upstream amino acid sensors CASTOR1 and SESN2, which sequester the GATOR2 complex in absence of amino acids. In the presence of abundant amino acids, GATOR2 is released from CASTOR1 and SESN2 and activated. As a component of the GATOR2 complex, functions as an activator of the amino acid-sensing branch of the mTORC1 signaling pathway. The GATOR2 complex indirectly activates mTORC1 through the inhibition of the GATOR1 subcomplex. GATOR2 probably acts as an E3 ubiquitin-protein ligase toward GATOR1. In the presence of abundant amino acids, the GATOR2 complex mediates ubiquitination of the NPRL2 core component of the GATOR1 complex, leading to GATOR1 inactivation. In the absence of amino acids, GATOR2 is inhibited, activating the GATOR1 complex. This Homo sapiens (Human) protein is GATOR2 complex protein WDR59.